We begin with the raw amino-acid sequence, 315 residues long: tRNA wybutosine-synthesizing protein 5 (315 aa).

The JmjC domain maps to 102–267 (DEKYYLRSLG…YDTTDTYGNK (166 aa)). Tyr106 is a 2-oxoglutarate binding site. Fe cation is bound by residues His160 and Asp162. Residues Asn166 and Lys175 each coordinate 2-oxoglutarate. Residue His235 participates in Fe cation binding.

The protein belongs to the TYW5 family. Homodimer. Requires Fe(2+) as cofactor.

It catalyses the reaction 7-[(3S)-3-amino-3-carboxypropyl]wyosine(37) in tRNA(Phe) + 2-oxoglutarate + O2 = 7-(2-hydroxy-3-amino-3-carboxypropyl)wyosine(37) in tRNA(Phe) + succinate + CO2. It functions in the pathway tRNA modification; wybutosine-tRNA(Phe) biosynthesis. In terms of biological role, tRNA hydroxylase that acts as a component of the wybutosine biosynthesis pathway. Wybutosine is a hyper modified guanosine with a tricyclic base found at the 3'-position adjacent to the anticodon of eukaryotic phenylalanine tRNA. Catalyzes the hydroxylation of 7-(a-amino-a-carboxypropyl)wyosine (yW-72) into undermodified hydroxywybutosine (OHyW*). OHyW* being further transformed into hydroxywybutosine (OHyW) by LCMT2/TYW4. OHyW is a derivative of wybutosine found in higher eukaryotes. This Mus musculus (Mouse) protein is tRNA wybutosine-synthesizing protein 5 (Tyw5).